We begin with the raw amino-acid sequence, 389 residues long: Putative phosphoserine aminotransferase (389 aa).

Position 45 (Arg-45) interacts with L-glutamate. Residues 79-80 (GT), Trp-114, Thr-169, Asp-191, and Gln-214 each bind pyridoxal 5'-phosphate. Lys-215 carries the N6-(pyridoxal phosphate)lysine modification. Residue 265-266 (NT) participates in pyridoxal 5'-phosphate binding.

The protein belongs to the class-V pyridoxal-phosphate-dependent aminotransferase family. SerC subfamily. As to quaternary structure, homodimer. Requires pyridoxal 5'-phosphate as cofactor.

The enzyme catalyses O-phospho-L-serine + 2-oxoglutarate = 3-phosphooxypyruvate + L-glutamate. It carries out the reaction 4-(phosphooxy)-L-threonine + 2-oxoglutarate = (R)-3-hydroxy-2-oxo-4-phosphooxybutanoate + L-glutamate. It functions in the pathway amino-acid biosynthesis; L-serine biosynthesis; L-serine from 3-phospho-D-glycerate: step 2/3. The protein operates within cofactor biosynthesis; pyridoxine 5'-phosphate biosynthesis; pyridoxine 5'-phosphate from D-erythrose 4-phosphate: step 3/5. In terms of biological role, catalyzes the reversible conversion of 3-phosphohydroxypyruvate to phosphoserine and of 3-hydroxy-2-oxo-4-phosphonooxybutanoate to phosphohydroxythreonine. This chain is Putative phosphoserine aminotransferase, found in Schizosaccharomyces pombe (strain 972 / ATCC 24843) (Fission yeast).